The chain runs to 201 residues: Small ribosomal subunit protein uS4 (201 aa).

The interval 1–38 (MARYTGPATRKSRRLGVDLVGGDQSFEKRPYPPGQHGR) is disordered. The S4 RNA-binding domain maps to 91-157 (SRLDNVVYRA…DPFVIARETA (67 aa)).

The protein belongs to the universal ribosomal protein uS4 family. In terms of assembly, part of the 30S ribosomal subunit. Contacts protein S5. The interaction surface between S4 and S5 is involved in control of translational fidelity.

Its function is as follows. One of the primary rRNA binding proteins, it binds directly to 16S rRNA where it nucleates assembly of the body of the 30S subunit. Functionally, with S5 and S12 plays an important role in translational accuracy. The sequence is that of Small ribosomal subunit protein uS4 from Mycobacterium sp. (strain JLS).